The chain runs to 70 residues: Small ribosomal subunit protein bS21 (70 aa).

The protein belongs to the bacterial ribosomal protein bS21 family.

The sequence is that of Small ribosomal subunit protein bS21 from Methylibium petroleiphilum (strain ATCC BAA-1232 / LMG 22953 / PM1).